Reading from the N-terminus, the 470-residue chain is 3-isopropylmalate dehydratase large subunit (470 aa).

Residues Cys349, Cys409, and Cys412 each coordinate [4Fe-4S] cluster.

It belongs to the aconitase/IPM isomerase family. LeuC type 1 subfamily. In terms of assembly, heterodimer of LeuC and LeuD. [4Fe-4S] cluster is required as a cofactor.

It carries out the reaction (2R,3S)-3-isopropylmalate = (2S)-2-isopropylmalate. It participates in amino-acid biosynthesis; L-leucine biosynthesis; L-leucine from 3-methyl-2-oxobutanoate: step 2/4. Catalyzes the isomerization between 2-isopropylmalate and 3-isopropylmalate, via the formation of 2-isopropylmaleate. In Afipia carboxidovorans (strain ATCC 49405 / DSM 1227 / KCTC 32145 / OM5) (Oligotropha carboxidovorans), this protein is 3-isopropylmalate dehydratase large subunit.